We begin with the raw amino-acid sequence, 256 residues long: uncharacterized protein (256 aa).

6 helical membrane passes run 6–26 (TSFI…VSFL), 29–49 (LALV…GTFI), 61–81 (ISGT…GLYF), 145–165 (IIGC…TGIA), 175–195 (YYFK…IWLI), and 218–238 (IGWL…AIQF).

Belongs to the DedA family.

It is found in the cell membrane. This is an uncharacterized protein from Buchnera aphidicola subsp. Acyrthosiphon pisum (strain APS) (Acyrthosiphon pisum symbiotic bacterium).